The sequence spans 232 residues: Glycerol-3-phosphate acyltransferase (232 aa).

6 consecutive transmembrane segments (helical) span residues 4–24, 56–76, 90–110, 124–144, 147–167, and 191–211; these read FLAIITVAYLIGSIPTSIIAG, AVTLIDIAKGTIAAVPVVAFF, IALNLIAGMSAVIGHVFTVFA, MLIGIAPISMLMVIGVFILAI, TRYVSVGSILAAIAFPLIIAI, and SLDYHLLIFGGIVAAAIIYTH.

It belongs to the PlsY family. As to quaternary structure, probably interacts with PlsX.

The protein resides in the cell inner membrane. The catalysed reaction is an acyl phosphate + sn-glycerol 3-phosphate = a 1-acyl-sn-glycero-3-phosphate + phosphate. It functions in the pathway lipid metabolism; phospholipid metabolism. Catalyzes the transfer of an acyl group from acyl-phosphate (acyl-PO(4)) to glycerol-3-phosphate (G3P) to form lysophosphatidic acid (LPA). This enzyme utilizes acyl-phosphate as fatty acyl donor, but not acyl-CoA or acyl-ACP. This Chlorobaculum parvum (strain DSM 263 / NCIMB 8327) (Chlorobium vibrioforme subsp. thiosulfatophilum) protein is Glycerol-3-phosphate acyltransferase.